The sequence spans 67 residues: Small ribosomal subunit protein eS17 (67 aa).

It belongs to the eukaryotic ribosomal protein eS17 family.

The sequence is that of Small ribosomal subunit protein eS17 from Pyrococcus horikoshii (strain ATCC 700860 / DSM 12428 / JCM 9974 / NBRC 100139 / OT-3).